Here is a 483-residue protein sequence, read N- to C-terminus: CdaA regulatory protein CdaR (483 aa).

A helical membrane pass occupies residues 9-26 (WAVKIIALLFALLLYVAV). 4 consecutive YbbR-like domains span residues 55 to 135 (IPVK…TVTI), 143 to 228 (FPVE…KITV), 237 to 316 (VPFK…TLHI), and 329 to 394 (VPIK…VNGP). The tract at residues 410 to 483 (LTSKKSNTST…STANSQSSSE (74 aa)) is disordered. A compositionally biased stretch (low complexity) spans 413 to 430 (KKSNTSTNDNSSNTSGNQ). Over residues 431 to 454 (DTDKQTNDQKNNQQEDTKNTDKNN) the composition is skewed to basic and acidic residues.

Interacts with CdaA.

Its subcellular location is the cell membrane. Its function is as follows. Upon coexpression in E.coli stimulates the diadenylate cyclase activity of CdaA about 20-fold. In B.subtilis c-di-AMP is a second messenger that mediates growth, DNA repair and cell wall homeostasis; it is toxic when present in excess. This is CdaA regulatory protein CdaR from Bacillus subtilis (strain 168).